A 684-amino-acid polypeptide reads, in one-letter code: Protein real-time (684 aa).

One can recognise a PRELI/MSF1 domain in the interval 2-178; it reads VQKYESPVRI…FVNELKQEGI (177 aa). Residues 297–474 form the CRAL-TRIO domain; sequence TPAVVEKYFP…FLGGSCNVID (178 aa). One can recognise a GOLD domain in the interval 537 to 684; that stretch reads HHGLYKAVDL…GFSSNSLQSR (148 aa).

The protein resides in the mitochondrion. This chain is Protein real-time, found in Anopheles gambiae (African malaria mosquito).